The primary structure comprises 255 residues: Taurine import ATP-binding protein TauB (255 aa).

Residues 2 to 229 (LQISHLYADY…RFVAGESSRS (228 aa)) enclose the ABC transporter domain. An ATP-binding site is contributed by 34–41 (GPSGCGKT).

It belongs to the ABC transporter superfamily. Taurine importer (TC 3.A.1.17.1) family. The complex is composed of two ATP-binding proteins (TauB), two transmembrane proteins (TauC) and a solute-binding protein (TauA).

The protein resides in the cell inner membrane. The enzyme catalyses taurine(out) + ATP + H2O = taurine(in) + ADP + phosphate + H(+). Its function is as follows. Part of the ABC transporter complex TauABC involved in taurine import. Responsible for energy coupling to the transport system. This Escherichia coli O157:H7 protein is Taurine import ATP-binding protein TauB.